The chain runs to 434 residues: Perilipin-3 (434 aa).

Positions Met-1–Gln-22 are disordered. Ser-2 is subject to N-acetylserine. Ser-31 carries the post-translational modification Phosphoserine. Residue Lys-65 is modified to N6-acetyllysine. Residue Ser-91 is modified to Phosphoserine. Residue Lys-122 forms a Glycyl lysine isopeptide (Lys-Gly) (interchain with G-Cter in SUMO1) linkage. Ser-130 and Ser-148 each carry phosphoserine. Thr-170 is subject to Phosphothreonine. 2 positions are modified to phosphoserine: Ser-175 and Ser-179. The residue at position 216 (Thr-216) is a Phosphothreonine. Residues Ser-217 and Ser-241 each carry the phosphoserine modification. Tyr-251 bears the Phosphotyrosine mark. Coiled coils occupy residues Glu-252–Ser-277 and Thr-353–His-377.

It belongs to the perilipin family. Homooligomer. Interacts with M6PR (via the cytoplasmic domain). Interacts with IGF2R (via the cytoplasmic domain). As to quaternary structure, may exist as a homodimer. In terms of processing, phosphorylation at Tyr-251 by isoform 1 of CHKA (CHKalpha2) promotes dissociation from lipid droplets: dissociation is followed by recruitment of autophagosome machinery to lipid droplets and subsequent lipid droplet lipolysis.

It is found in the lipid droplet. The protein resides in the endosome membrane. Its subcellular location is the cytoplasm. Functionally, structural component of lipid droplets, which is required for the formation and maintenance of lipid storage droplets. Required for the transport of mannose 6-phosphate receptors (MPR) from endosomes to the trans-Golgi network. This Homo sapiens (Human) protein is Perilipin-3 (PLIN3).